The following is a 118-amino-acid chain: UPF0212 protein HQ_2663A (118 aa).

Belongs to the UPF0212 family.

In Haloquadratum walsbyi (strain DSM 16790 / HBSQ001), this protein is UPF0212 protein HQ_2663A.